The primary structure comprises 329 residues: Thiamine thiazole synthase (329 aa).

Substrate contacts are provided by residues C86, 107-108, G115, and V180; that span reads EA. The residue at position 218 (C218) is a 2,3-didehydroalanine (Cys). Residues D220, H235, M287, and 297 to 299 contribute to the substrate site; that span reads RMG.

Belongs to the THI4 family. In terms of assembly, homooctamer. It depends on Fe cation as a cofactor. In terms of processing, during the catalytic reaction, a sulfide is transferred from Cys-218 to a reaction intermediate, generating a dehydroalanine residue.

The protein resides in the cytoplasm. It is found in the nucleus. The catalysed reaction is [ADP-thiazole synthase]-L-cysteine + glycine + NAD(+) = [ADP-thiazole synthase]-dehydroalanine + ADP-5-ethyl-4-methylthiazole-2-carboxylate + nicotinamide + 3 H2O + 2 H(+). Its function is as follows. Involved in biosynthesis of the thiamine precursor thiazole. Catalyzes the conversion of NAD and glycine to adenosine diphosphate 5-(2-hydroxyethyl)-4-methylthiazole-2-carboxylic acid (ADT), an adenylated thiazole intermediate. The reaction includes an iron-dependent sulfide transfer from a conserved cysteine residue of the protein to a thiazole intermediate. The enzyme can only undergo a single turnover, which suggests it is a suicide enzyme. May have additional roles in adaptation to various stress conditions and in DNA damage tolerance. In Phaeosphaeria nodorum (strain SN15 / ATCC MYA-4574 / FGSC 10173) (Glume blotch fungus), this protein is Thiamine thiazole synthase.